Reading from the N-terminus, the 920-residue chain is Rho GTPase-activating protein REN1 (920 aa).

Positions 1 to 10 (MANKNAESSS) are enriched in polar residues. A disordered region spans residues 1-64 (MANKNAESSS…SRGGNTVFKS (64 aa)). A compositionally biased stretch (low complexity) spans 17-31 (QPNQQQQQQPPIANE). Residues 45–64 (PAQSGNTDSRSRGGNTVFKS) are compositionally biased toward polar residues. In terms of domain architecture, PH spans 60–167 (TVFKSGPLSI…WKAALENALT (108 aa)). A Rho-GAP domain is found at 213–412 (LALEDVDGAP…TLLEEYESIF (200 aa)). Disordered regions lie at residues 417–592 (LSPG…NLSM), 719–825 (RLGH…ALSK), and 837–920 (RSQI…TFSR). The segment covering 434 to 463 (EGSDDEEYDDDDDGSQGSEDYTDEEEDLEN) has biased composition (acidic residues). The span at 464–473 (ESNGSYSESA) shows a compositional bias: polar residues. Basic and acidic residues-rich tracts occupy residues 475–491 (SEDKYADSIDPDDHKIN), 499–509 (KSPKRSKEPKK), and 520–532 (PRHDDGKKDEDIV). Over residues 555–568 (SSTSDVASDTQKPS) the composition is skewed to polar residues. Residues 577 to 586 (SKRHWGRTPG) are compositionally biased toward basic residues. Positions 598–728 (SVEVDEDNAD…RLGHHDGKAS (131 aa)) form a coiled coil. Composition is skewed to basic and acidic residues over residues 734-768 (ASKESRKLPEHNAKMKEKQKDTEAASTHISERSTS) and 776-788 (RENETEKQQDSRS). The span at 814 to 825 (EGSTTTTSALSK) shows a compositional bias: low complexity. 2 stretches are compositionally biased toward polar residues: residues 854–864 (GQPSPTSGQNR) and 872–885 (GSGSNQDPDSSKLQ). Positions 889–903 (ILDRGRSENGGDRGR) are enriched in basic and acidic residues. Over residues 910–920 (HPNTTPRTFSR) the composition is skewed to polar residues.

In terms of assembly, interacts with ARAC11/ROP1. Expressed in pollen and pollen tubes.

Its subcellular location is the cell membrane. In terms of biological role, acts as a GTPase activator for the Rac-type GTPase by converting it to an inactive GDP-bound state. Maintains the global inactivation of ARAC11/ROP1 at the apex in pollen tubes in order to regulate the polar cell growth. The protein is Rho GTPase-activating protein REN1 (REN1) of Arabidopsis thaliana (Mouse-ear cress).